A 1095-amino-acid polypeptide reads, in one-letter code: Formin-like protein 2 (1095 aa).

The GBD/FH3 domain maps to 23-469; the sequence is LPMPEPGELE…EAIQRQSTLE (447 aa). A coiled-coil region spans residues 381 to 478; that stretch reads LLEDAETKNA…EKKIHELEKQ (98 aa). Residues 521–602 form a disordered region; the sequence is PSSGPLPPPP…PSAPPLPGTS (82 aa). Composition is skewed to pro residues over residues 524 to 534, 548 to 576, and 583 to 599; these read GPLPPPPPPLP, ATPP…PLPG, and PAPP…PPLP. An FH2 domain is found at 617-1008; it reads IKKPIKTKFR…LMEKLLEQEA (392 aa).

It belongs to the formin homology family. As to quaternary structure, interacts with TCP11L2; this interaction promotes muscle-derived satellite cell (MDSC) migration and differentiation.

The protein resides in the cytoplasm. In terms of biological role, plays a role in the regulation of cell morphology and cytoskeletal organization. Required in the cortical actin filament dynamics. The chain is Formin-like protein 2 from Bos taurus (Bovine).